The following is a 436-amino-acid chain: Chaperone protein dnaJ 16 (436 aa).

The 66-residue stretch at 20-85 (DPYEVLGVLR…EKRRQFDSAG (66 aa)) folds into the J domain. The stretch at 291-348 (TQEKEDLRSVEAQILTKRAELAKFETEYREVLVQFTDMTSRYAQEMQSIDELLKQRNE) forms a coiled coil. Positions 360–416 (KRSSSKNRMRKSSFKKAAAKAPAPTEQEEEEEEEEEEEEESSRQKNKKPSTCDKSET) are disordered. Basic residues predominate over residues 362-377 (SSSKNRMRKSSFKKAA). Over residues 385 to 399 (EQEEEEEEEEEEEEE) the composition is skewed to acidic residues.

Belongs to the DnaJ family. B/II subfamily. Expressed constitutively in seedlings, roots, leaves, stems, flowers and siliques.

It is found in the membrane. Plays a continuous role in plant development probably in the structural organization of compartments. Seems to not be involved in gravitropism signaling pathway. This Arabidopsis thaliana (Mouse-ear cress) protein is Chaperone protein dnaJ 16 (ATJ16).